The following is a 102-amino-acid chain: Small ribosomal subunit protein uS10 (102 aa).

The protein belongs to the universal ribosomal protein uS10 family. Part of the 30S ribosomal subunit.

In terms of biological role, involved in the binding of tRNA to the ribosomes. This Kineococcus radiotolerans (strain ATCC BAA-149 / DSM 14245 / SRS30216) protein is Small ribosomal subunit protein uS10.